We begin with the raw amino-acid sequence, 149 residues long: Large ribosomal subunit protein bL9 (149 aa).

Belongs to the bacterial ribosomal protein bL9 family.

In terms of biological role, binds to the 23S rRNA. This Haemophilus influenzae (strain PittEE) protein is Large ribosomal subunit protein bL9.